The sequence spans 828 residues: Periplasmic nitrate reductase (828 aa).

Residues 1–31 constitute a signal peptide (tat-type signal); sequence MKLSRRSFMKANAVAAAAAAAGLSVPGVARA. Residues 39–95 enclose the 4Fe-4S Mo/W bis-MGD-type domain; sequence IKWDKAPCRFCGTGCGVLVGTQQGRVVACQGDPDAPVNRGLNCIKGYFLPKIMYGKD. Residues C46, C49, C53, and C81 each coordinate [4Fe-4S] cluster. Residues K83, Q150, N175, C179, 212-219, 243-247, 262-264, M372, Q376, N482, 508-509, K531, D558, and 718-727 contribute to the Mo-bis(molybdopterin guanine dinucleotide) site; these read WGSNMAEM, STFQH, QSD, SD, and TGRVLEHWHT. F794 contributes to the substrate binding site. N802 and K819 together coordinate Mo-bis(molybdopterin guanine dinucleotide).

The protein belongs to the prokaryotic molybdopterin-containing oxidoreductase family. NasA/NapA/NarB subfamily. As to quaternary structure, component of the periplasmic nitrate reductase NapAB complex composed of NapA and NapB. Requires [4Fe-4S] cluster as cofactor. The cofactor is Mo-bis(molybdopterin guanine dinucleotide). In terms of processing, predicted to be exported by the Tat system. The position of the signal peptide cleavage has not been experimentally proven.

It localises to the periplasm. It catalyses the reaction 2 Fe(II)-[cytochrome] + nitrate + 2 H(+) = 2 Fe(III)-[cytochrome] + nitrite + H2O. Its function is as follows. Catalytic subunit of the periplasmic nitrate reductase complex NapAB. Receives electrons from NapB and catalyzes the reduction of nitrate to nitrite. The sequence is that of Periplasmic nitrate reductase from Salmonella dublin (strain CT_02021853).